A 153-amino-acid chain; its full sequence is Inner membrane protein YjiG (153 aa).

Residues 1-31 are Periplasmic-facing; it reads MTTQVRKNVMDMFIDGARRGFTIATTNLLPN. The helical transmembrane segment at 32–52 threads the bilayer; that stretch reads VVMAFVIIQALKITGLLDWVG. The Cytoplasmic portion of the chain corresponds to 53–68; that stretch reads HICEPVMALWGLPGEA. 2 helical membrane-spanning segments follow: residues 69–89 and 90–110; these read ATVL…AASL and ATAG…MYLM. Residues 111–132 lie on the Cytoplasmic side of the membrane; that stretch reads GNPVQNVGRCLGTAEVNAKYYP. A helical membrane pass occupies residues 133–153; sequence HIITVCVINALLSIWVMQLIV.

Belongs to the SpmB family.

Its subcellular location is the cell inner membrane. The protein is Inner membrane protein YjiG (yjiG) of Escherichia coli O157:H7.